We begin with the raw amino-acid sequence, 166 residues long: Phosphopantetheine adenylyltransferase (166 aa).

Thr14 contributes to the substrate binding site. ATP is bound by residues 14–15 (TF) and His22. Substrate-binding residues include Lys46, Leu78, and Arg92. Residues 93-95 (GLR), Glu103, and 128-134 (WMYLSSS) contribute to the ATP site.

The protein belongs to the bacterial CoaD family. In terms of assembly, homohexamer. Requires Mg(2+) as cofactor.

It localises to the cytoplasm. The enzyme catalyses (R)-4'-phosphopantetheine + ATP + H(+) = 3'-dephospho-CoA + diphosphate. It functions in the pathway cofactor biosynthesis; coenzyme A biosynthesis; CoA from (R)-pantothenate: step 4/5. In terms of biological role, reversibly transfers an adenylyl group from ATP to 4'-phosphopantetheine, yielding dephospho-CoA (dPCoA) and pyrophosphate. The protein is Phosphopantetheine adenylyltransferase of Maridesulfovibrio salexigens (strain ATCC 14822 / DSM 2638 / NCIMB 8403 / VKM B-1763) (Desulfovibrio salexigens).